The following is a 79-amino-acid chain: Small ribosomal subunit protein bS18 (79 aa).

It belongs to the bacterial ribosomal protein bS18 family. In terms of assembly, part of the 30S ribosomal subunit. Forms a tight heterodimer with protein bS6.

Functionally, binds as a heterodimer with protein bS6 to the central domain of the 16S rRNA, where it helps stabilize the platform of the 30S subunit. The chain is Small ribosomal subunit protein bS18 from Streptococcus pyogenes serotype M5 (strain Manfredo).